Consider the following 56-residue polypeptide: UPF0391 membrane protein Jann_3570 (56 aa).

The next 2 helical transmembrane spans lie at 4 to 24 (WAVTFLIIALIAALFGFGGIA) and 29 to 48 (GIAQILFFVFIALFAISLVA).

Belongs to the UPF0391 family.

The protein resides in the cell membrane. This chain is UPF0391 membrane protein Jann_3570, found in Jannaschia sp. (strain CCS1).